The primary structure comprises 681 residues: Chaperone protein HtpG (681 aa).

The a; substrate-binding stretch occupies residues 1–326 (MQKGNIGVTT…SPDIPLNVSR (326 aa)). Residues 327–545 (SYLQSDSNVK…YMRRMKEMAN (219 aa)) are b. The interval 546-681 (IQAGMSFYGE…NFVKRSIELI (136 aa)) is c. The tract at residues 601–620 (DALKKKQEGKKDEDIPTAEK) is disordered.

This sequence belongs to the heat shock protein 90 family. Homodimer.

The protein localises to the cytoplasm. Functionally, molecular chaperone. Has ATPase activity. This chain is Chaperone protein HtpG, found in Bacteroides fragilis (strain ATCC 25285 / DSM 2151 / CCUG 4856 / JCM 11019 / LMG 10263 / NCTC 9343 / Onslow / VPI 2553 / EN-2).